The chain runs to 228 residues: NAD(P)H-hydrate epimerase (228 aa).

The YjeF N-terminal domain maps to 9–209 (VRAVERLAHR…LLGLTPAFLA (201 aa)). 53–57 (NNGGD) is a (6S)-NADPHX binding site. N54 and D115 together coordinate K(+). Residues 119–125 (GIGLARP) and D148 each bind (6S)-NADPHX. S151 is a binding site for K(+).

This sequence belongs to the NnrE/AIBP family. K(+) is required as a cofactor.

It catalyses the reaction (6R)-NADHX = (6S)-NADHX. The enzyme catalyses (6R)-NADPHX = (6S)-NADPHX. Its function is as follows. Catalyzes the epimerization of the S- and R-forms of NAD(P)HX, a damaged form of NAD(P)H that is a result of enzymatic or heat-dependent hydration. This is a prerequisite for the S-specific NAD(P)H-hydrate dehydratase to allow the repair of both epimers of NAD(P)HX. In Bordetella parapertussis (strain 12822 / ATCC BAA-587 / NCTC 13253), this protein is NAD(P)H-hydrate epimerase.